Reading from the N-terminus, the 570-residue chain is Formate--tetrahydrofolate ligase (570 aa).

Residue 65-72 participates in ATP binding; the sequence is TPLGEGKT.

Belongs to the formate--tetrahydrofolate ligase family.

It carries out the reaction (6S)-5,6,7,8-tetrahydrofolate + formate + ATP = (6R)-10-formyltetrahydrofolate + ADP + phosphate. It participates in one-carbon metabolism; tetrahydrofolate interconversion. The protein is Formate--tetrahydrofolate ligase of Herpetosiphon aurantiacus (strain ATCC 23779 / DSM 785 / 114-95).